The chain runs to 1476 residues: Cystic fibrosis transmembrane conductance regulator (1476 aa).

Topologically, residues Met1–Phe77 are cytoplasmic. Residues Phe78–Gln98 traverse the membrane as a helical segment. One can recognise an ABC transmembrane type-1 1 domain in the interval Phe81 to Phe365. Over Pro99 to Tyr122 the chain is Extracellular. The chain crosses the membrane as a helical span at residues Leu123–His146. The Cytoplasmic segment spans residues Arg147 to Leu195. Residues Ala196 to Trp216 traverse the membrane as a helical segment. Residues Asp217–Ser222 lie on the Extracellular side of the membrane. The helical transmembrane segment at Ala223–Met243 threads the bilayer. Residues Met244–Lys298 are Cytoplasmic-facing. A helical membrane pass occupies residues Ala299–Phe319. Topologically, residues Leu320–Thr339 are extracellular. A helical membrane pass occupies residues Ile340–Val358. Residues Gln359–Gly853 are Cytoplasmic-facing. Residues Trp401, Gly458–Thr465, and Gln493 each bind ATP. An ABC transporter 1 domain is found at Ser423–Gly646. Residue Cys524 is the site of S-palmitoyl cysteine attachment. Residues Ser549 and Ser660 each carry the phosphoserine modification. Residues Thr654–Glu826 form a disordered R region region. The residue at position 670 (Ser670) is a Phosphoserine; by PKA. 3 positions are modified to phosphoserine: Ser684, Ser698, and Ser710. Thr715 is subject to Phosphothreonine. Residues Ser732, Ser763, Ser785, Ser790, and Ser808 each carry the phosphoserine modification. Residues Leu854 to Phe874 form a helical membrane-spanning segment. The ABC transmembrane type-1 2 domain occupies Leu854–Arg1153. Residues Val875–Ile913 are Extracellular-facing. 2 N-linked (GlcNAc...) asparagine glycosylation sites follow: Asn889 and Asn895. A discontinuously helical transmembrane segment spans residues Tyr914–His934. At Thr935–Thr985 the chain is on the cytoplasmic side. Residues Ile986–Leu1006 traverse the membrane as a helical segment. Residues Gln1007 to Pro1008 lie on the Extracellular side of the membrane. The helical transmembrane segment at Tyr1009–Leu1029 threads the bilayer. Residues His1030–Thr1090 lie on the Cytoplasmic side of the membrane. The chain crosses the membrane as a helical span at residues Leu1091–Phe1111. The Extracellular portion of the chain corresponds to Ile1112–Gly1125. A helical membrane pass occupies residues Ile1126–Ile1146. Residues Asp1147 to Leu1476 lie on the Cytoplasmic side of the membrane. The ABC transporter 2 domain maps to Val1208 to Ser1439. ATP is bound by residues Tyr1215 and Gly1240 to Ser1247. Residues Arg1382–Leu1476 form an interaction with GORASP2 region. A lipid anchor (S-palmitoyl cysteine) is attached at Cys1391. Residues Ser1440 and Ser1452 each carry the phosphoserine modification. Residues Phe1446 to Leu1476 are disordered. The span at Glu1466–Leu1476 shows a compositional bias: acidic residues. Positions Thr1474–Leu1476 match the PDZ-binding motif.

This sequence belongs to the ABC transporter superfamily. ABCC family. CFTR transporter (TC 3.A.1.202) subfamily. As to quaternary structure, monomer; does not require oligomerization for channel activity. May form oligomers in the membrane. Interacts with SLC26A3, SLC26A6 and NHERF1. Interacts with SHANK2. Interacts with MYO6. Interacts (via C-terminus) with GOPC (via PDZ domain); this promotes CFTR internalization and thereby decreases channel activity. Interacts with SLC4A7 through NHERF1. Found in a complex with MYO5B and RAB11A. Interacts with ANO1. Interacts with SLC26A8. Interacts with AHCYL1; the interaction increases CFTR activity. Interacts with CSE1L. The core-glycosylated form interacts with GORASP2 (via PDZ GRASP-type 1 domain) in respone to ER stress. Interacts with MARCHF2; the interaction leads to CFTR ubiqtuitination and degradation. Interacts with ADGRG2. N-glycosylated. Post-translationally, phosphorylated; cAMP treatment promotes phosphorylation and activates the channel. Dephosphorylation decreases the ATPase activity (in vitro). Phosphorylation at PKA sites activates the channel. Phosphorylation at PKC sites enhances the response to phosphorylation by PKA. Phosphorylated by AMPK; this inhibits channel activity. In terms of processing, ubiquitinated, leading to its degradation in the lysosome. Deubiquitination by USP10 in early endosomes enhances its endocytic recycling to the cell membrane. Ubiquitinated by RNF185 during ER stress. Ubiquitinated by MARCHF2. As to expression, expressed in the epididymis (at protein level). In the initial segment of the epididymis, detected on both the luminal and basolateral sides of the ducts where it is expressed in the duct columnar cells as well as in the interstitial smooth muscle cells. Expressed in sperm in the caput. In the cauda, detected along the luminal border but not continuously and is also expressed on the basolateral surface. Within the caudal lumen, detected on sperm. Isoform 1: Expressed in a variety of epithelial tissues including colon, kidney, lung, small intestine, pancreatic duct and testis. Isoform 2: Expressed only in testis. Isoform 3: Expressed only in testis.

The protein resides in the apical cell membrane. It is found in the early endosome membrane. It localises to the cell membrane. Its subcellular location is the recycling endosome membrane. The protein localises to the endoplasmic reticulum membrane. The protein resides in the nucleus. It catalyses the reaction ATP + H2O + closed Cl(-) channel = ADP + phosphate + open Cl(-) channel.. The enzyme catalyses chloride(in) = chloride(out). The catalysed reaction is hydrogencarbonate(in) = hydrogencarbonate(out). It carries out the reaction ATP + H2O = ADP + phosphate + H(+). In terms of biological role, epithelial ion channel that plays an important role in the regulation of epithelial ion and water transport and fluid homeostasis. Mediates the transport of chloride ions across the cell membrane. Possesses an intrinsic ATPase activity and utilizes ATP to gate its channel; the passive flow of anions through the channel is gated by cycles of ATP binding and hydrolysis by the ATP-binding domains. The ion channel is also permeable to HCO(3)(-); selectivity depends on the extracellular chloride concentration. Exerts its function also by modulating the activity of other ion channels and transporters. Contributes to the regulation of the pH and the ion content of the epithelial fluid layer. Modulates the activity of the epithelial sodium channel (ENaC) complex, in part by regulating the cell surface expression of the ENaC complex. May regulate bicarbonate secretion and salvage in epithelial cells by regulating the transporter SLC4A7. Can inhibit the chloride channel activity of ANO1. Plays a role in the chloride and bicarbonate homeostasis during sperm epididymal maturation and capacitation. This Mus musculus (Mouse) protein is Cystic fibrosis transmembrane conductance regulator.